A 353-amino-acid polypeptide reads, in one-letter code: MKFVDEVRIHVKAGDGGNGAVAWRREKFIPRGGPAGGDGGNGADVVLVVDPQLSTLLDYRYVREHRAKSGEHGQGSDMNGRDGEPLVLRVPPGTVVKDAATGELIADLGAADERLVVAKGGRGGLGNMNFATSTNQAPRYAEDGTLGEERDLVLELKLLADVGIVGYPNAGKSTLISRISRARPKIADYPFTTLVPNLGVVSWRERSFVVADIPGLIEGAHEGAGLGHQFLRHVERCRVLVHLVEGANPEEGRSPKADYEAINRELALYSPTLAEKPQILAVTKIDVPEARAAGEKLRKAFARRKQPVEVHLVSAVTGEGMPELMDAVGRALYAEAPRRGGRGRRLGKPRAEK.

In terms of domain architecture, Obg spans 1-159 (MKFVDEVRIH…RDLVLELKLL (159 aa)). Residues 160-333 (ADVGIVGYPN…LMDAVGRALY (174 aa)) form the OBG-type G domain. Residues 166-173 (GYPNAGKS), 191-195 (FTTLV), 212-215 (DIPG), 283-286 (TKID), and 314-316 (SAV) contribute to the GTP site. Residues Ser173 and Thr193 each contribute to the Mg(2+) site.

This sequence belongs to the TRAFAC class OBG-HflX-like GTPase superfamily. OBG GTPase family. Monomer. It depends on Mg(2+) as a cofactor.

Its subcellular location is the cytoplasm. In terms of biological role, an essential GTPase which binds GTP, GDP and possibly (p)ppGpp with moderate affinity, with high nucleotide exchange rates and a fairly low GTP hydrolysis rate. Plays a role in control of the cell cycle, stress response, ribosome biogenesis and in those bacteria that undergo differentiation, in morphogenesis control. This Anaeromyxobacter sp. (strain Fw109-5) protein is GTPase Obg.